The chain runs to 250 residues: Ribosomal RNA small subunit methyltransferase J (250 aa).

S-adenosyl-L-methionine-binding positions include 101 to 102, 117 to 118, 153 to 154, and Asp171; these read RD, ER, and SS.

This sequence belongs to the methyltransferase superfamily. RsmJ family.

The protein resides in the cytoplasm. It carries out the reaction guanosine(1516) in 16S rRNA + S-adenosyl-L-methionine = N(2)-methylguanosine(1516) in 16S rRNA + S-adenosyl-L-homocysteine + H(+). In terms of biological role, specifically methylates the guanosine in position 1516 of 16S rRNA. In Escherichia coli (strain UTI89 / UPEC), this protein is Ribosomal RNA small subunit methyltransferase J.